Consider the following 261-residue polypeptide: Carbonic anhydrase 1 (261 aa).

An N-acetylalanine modification is found at Ala2. The region spanning 4-261 (ADWGYGSENG…LKGRTVRASF (258 aa)) is the Alpha-carbonic anhydrase domain. The Proton donor/acceptor role is filled by His65. 3 residues coordinate Zn(2+): His95, His97, and His120. Substrate is bound by residues Thr200 and 200–201 (TH). A disordered region spans residues 239 to 261 (AVPVLSNHRPPQPLKGRTVRASF).

The protein belongs to the alpha-carbonic anhydrase family. The cofactor is Zn(2+).

It localises to the cytoplasm. The catalysed reaction is hydrogencarbonate + H(+) = CO2 + H2O. It catalyses the reaction urea = cyanamide + H2O. Inhibited by acetazolamide. Its function is as follows. Catalyzes the reversible hydration of carbon dioxide. Can hydrate cyanamide to urea. The polypeptide is Carbonic anhydrase 1 (Ca1) (Mus musculus (Mouse)).